The primary structure comprises 100 residues: Small ribosomal subunit protein uS14c (100 aa).

The protein belongs to the universal ribosomal protein uS14 family. As to quaternary structure, part of the 30S ribosomal subunit.

The protein resides in the plastid. It localises to the chloroplast. In terms of biological role, binds 16S rRNA, required for the assembly of 30S particles. The polypeptide is Small ribosomal subunit protein uS14c (Lactuca sativa (Garden lettuce)).